Consider the following 610-residue polypeptide: Dopamine beta-hydroxylase (610 aa).

Residues 1–9 (MQVPSPSVR) lie on the Cytoplasmic side of the membrane. Residues 10 to 30 (EAASMYGTAVAVFLVILVAAL) traverse the membrane as a helical; Signal-anchor for type II membrane protein segment. At 31 to 610 (QGSAPAESPF…TVLNISGGKG (580 aa)) the chain is on the intragranular side. A DOMON domain is found at 50 to 166 (GTLELSWNIS…GTVHLVYGFL (117 aa)). Disulfide bonds link cysteine 147-cysteine 589, cysteine 225-cysteine 276, cysteine 262-cysteine 288, cysteine 383-cysteine 496, cysteine 387-cysteine 558, and cysteine 459-cysteine 481. An N-linked (GlcNAc...) asparagine glycan is attached at asparagine 177. Residue tyrosine 223 is part of the active site. Positions 255 and 256 each coordinate Cu(2+). Cu(2+)-binding residues include histidine 326, histidine 405, histidine 407, and methionine 480. Histidine 405 is an active-site residue. Residue asparagine 559 is glycosylated (N-linked (GlcNAc...) asparagine). The interval 585 to 610 (PTPHCPASQAQSPAGPTVLNISGGKG) is disordered.

Belongs to the copper type II ascorbate-dependent monooxygenase family. In terms of assembly, homotetramer; composed of two disulfide-linked dimers. Cu(2+) serves as cofactor. In terms of processing, proteolytic cleavage after the membrane-anchor leads to the release of the soluble form. N-glycosylated. As to expression, detected in chromaffin granules in the adrenal medulla (at protein level). Detected in adrenal medulla.

It is found in the cytoplasmic vesicle. Its subcellular location is the secretory vesicle lumen. It localises to the secretory vesicle. The protein localises to the chromaffin granule lumen. The protein resides in the secretory vesicle membrane. It is found in the chromaffin granule membrane. It catalyses the reaction dopamine + 2 L-ascorbate + O2 = (R)-noradrenaline + 2 monodehydro-L-ascorbate radical + H2O. Its pathway is catecholamine biosynthesis; (R)-noradrenaline biosynthesis; (R)-noradrenaline from dopamine: step 1/1. Catalyzes the hydroxylation of dopamine to noradrenaline (also known as norepinephrine), and is thus vital for regulation of these neurotransmitters. The sequence is that of Dopamine beta-hydroxylase (DBH) from Bos taurus (Bovine).